The primary structure comprises 182 residues: Flagellar transcriptional regulator FlhC (182 aa).

Zn(2+)-binding residues include Cys-138, Cys-141, Cys-158, and Cys-161.

Belongs to the FlhC family. As to quaternary structure, heterohexamer composed of two FlhC and four FlhD subunits. Each FlhC binds a FlhD dimer, forming a heterotrimer, and a hexamer assembles by dimerization of two heterotrimers. Zn(2+) is required as a cofactor.

Its subcellular location is the cytoplasm. Functionally, functions in complex with FlhD as a master transcriptional regulator that regulates transcription of several flagellar and non-flagellar operons by binding to their promoter region. Activates expression of class 2 flagellar genes, including fliA, which is a flagellum-specific sigma factor that turns on the class 3 genes. Also regulates genes whose products function in a variety of physiological pathways. In Gallionella capsiferriformans (strain ES-2) (Gallionella ferruginea capsiferriformans (strain ES-2)), this protein is Flagellar transcriptional regulator FlhC.